Consider the following 859-residue polypeptide: Leucine--tRNA ligase (859 aa).

A 'HIGH' region motif is present at residues 42–52 (PYPSGRLHMGH). A 'KMSKS' region motif is present at residues 618 to 622 (KMSKS). Lys621 is a binding site for ATP.

This sequence belongs to the class-I aminoacyl-tRNA synthetase family.

Its subcellular location is the cytoplasm. The catalysed reaction is tRNA(Leu) + L-leucine + ATP = L-leucyl-tRNA(Leu) + AMP + diphosphate. This chain is Leucine--tRNA ligase, found in Shewanella baltica (strain OS185).